Here is a 258-residue protein sequence, read N- to C-terminus: Alpha- and beta-fibrinogenase stejnefibrase-1 (258 aa).

The signal sequence occupies residues 1-18 (MELIRVLANLLILQLSYA). Residues 19-24 (QKSSEL) constitute a propeptide that is removed on maturation. One can recognise a Peptidase S1 domain in the interval 25-249 (IIGGDECNID…HLDWIQNIIA (225 aa)). 6 disulfides stabilise this stretch: Cys31/Cys163, Cys50/Cys66, Cys98/Cys256, Cys142/Cys210, Cys174/Cys189, and Cys200/Cys225. Catalysis depends on His65, which acts as the Charge relay system. N-linked (GlcNAc...) asparagine glycosylation is present at Asn103. The Charge relay system role is filled by Asp110. 4 N-linked (GlcNAc...) asparagine glycosylation sites follow: Asn121, Asn122, Asn154, and Asn170. The Charge relay system role is filled by Ser204.

Belongs to the peptidase S1 family. Snake venom subfamily. Monomer. Expressed by the venom gland.

Its subcellular location is the secreted. With respect to regulation, its activity is inhibited by PMSF and p-nitrophenyl-p-guanidinobenzoate (NPGB). Snake venom serine protease. Degrades concomitantly alpha- (FGA) and beta-chains of fibrinogen (FGB). The sequence is that of Alpha- and beta-fibrinogenase stejnefibrase-1 from Trimeresurus stejnegeri (Chinese green tree viper).